We begin with the raw amino-acid sequence, 130 residues long: P antigen family member 5 (130 aa).

Disordered stretches follow at residues 1–88 (MQAP…TDVE) and 101–130 (DAPG…EGQL). The segment covering 14–26 (TREEVRDMSEHVT) has biased composition (basic and acidic residues). Polar residues predominate over residues 27–42 (RSQSSERGNDQESSQP). Residues Thr-113 and Thr-116 each carry the phosphothreonine modification.

Belongs to the GAGE family.

The sequence is that of P antigen family member 5 (PAGE5) from Homo sapiens (Human).